Reading from the N-terminus, the 425-residue chain is Pyruvate dehydrogenase E1 component subunit alpha-3, chloroplastic (425 aa).

The transit peptide at 1-66 directs the protein to the chloroplast; that stretch reads MAAASSFTAA…VLPGNKAAPA (66 aa). Histidine 109, tyrosine 135, arginine 136, alanine 184, isoleucine 186, aspartate 224, glycine 225, and asparagine 253 together coordinate pyruvate. The thiamine diphosphate site is built by tyrosine 135, arginine 136, alanine 184, isoleucine 186, aspartate 224, glycine 225, asparagine 253, and histidine 322. A Mg(2+)-binding site is contributed by aspartate 224. Asparagine 253 contributes to the Mg(2+) binding site.

Tetramer of 2 alpha and 2 beta subunits. Thiamine diphosphate serves as cofactor. Requires Mg(2+) as cofactor.

The protein localises to the plastid. It is found in the chloroplast. The catalysed reaction is N(6)-[(R)-lipoyl]-L-lysyl-[protein] + pyruvate + H(+) = N(6)-[(R)-S(8)-acetyldihydrolipoyl]-L-lysyl-[protein] + CO2. Its function is as follows. The pyruvate dehydrogenase complex catalyzes the overall conversion of pyruvate to acetyl-CoA and CO(2). It contains multiple copies of three enzymatic components: pyruvate dehydrogenase (E1), dihydrolipoamide acetyltransferase (E2) and lipoamide dehydrogenase (E3). The sequence is that of Pyruvate dehydrogenase E1 component subunit alpha-3, chloroplastic from Oryza sativa subsp. japonica (Rice).